A 492-amino-acid polypeptide reads, in one-letter code: ATP synthase subunit beta, plastid (492 aa).

170–177 contributes to the ATP binding site; the sequence is GGAGVGKT.

The protein belongs to the ATPase alpha/beta chains family. As to quaternary structure, F-type ATPases have 2 components, CF(1) - the catalytic core - and CF(0) - the membrane proton channel. CF(1) has five subunits: alpha(3), beta(3), gamma(1), delta(1), epsilon(1). CF(0) has four main subunits: a(1), b(1), b'(1) and c(9-12).

It localises to the plastid membrane. The catalysed reaction is ATP + H2O + 4 H(+)(in) = ADP + phosphate + 5 H(+)(out). Produces ATP from ADP in the presence of a proton gradient across the membrane. The catalytic sites are hosted primarily by the beta subunits. This Aneura mirabilis (Parasitic liverwort) protein is ATP synthase subunit beta, plastid.